Here is a 99-residue protein sequence, read N- to C-terminus: Small ribosomal subunit protein eS24 (99 aa).

The protein belongs to the eukaryotic ribosomal protein eS24 family.

The protein is Small ribosomal subunit protein eS24 (rps2e) of Thermoplasma volcanium (strain ATCC 51530 / DSM 4299 / JCM 9571 / NBRC 15438 / GSS1).